The chain runs to 653 residues: MASKKKERGPPPHSRSWQALTPPLSEWILDAVAAMGFTRMTPVQASTIPLFMGHKDVVVEAVTGSGKTMAFLIPVVEKLLRLEAPIKKHHVGAIIVSPTRELAEQIYKVLLSLLAFHAPSAAAIQPSTSDETADGETTLPSYPSSTLKVVPQLLLGGATTPAQDLSTFLKRSPNLFVSTPGRLLELLSSPHVHCPQTSFEVLVLDEADRLLDLGFKDDLQKTLARLPKQRRTGLFSATVSDAVDQIIRVGLRNPVKIAVKVKGAPGTEEKRTPASLQMTYLLTRPSHKIPAIRQILNSIDNTPQKTILYFSTCAAVDYWSHVLPSLLPEIFVTLPLHGKHPPNVRQKNFSRFTNSVSPSVLLTTDVAARGLDIPLVDLVIQFDPPTDPKAYLHRCGRAGRAGRRGLSVILLCPGREEDYIPFLEVRKTPVSLLESPPVALSDTLATEATSKIRETVLRDRALHDKAQKAFVSWVRSYTKHQSSSIFRITDIDWEEAGRAWGLLKLPKMPELQKFSGDRTLGVTLDWDKYSYKDKQREKHRQESLNSATTHNPLKRPAPSSSSNNDTAPWSKTLEKKSDKEKRRERKRAKKEREHWEKMTEEEKTKSRETHQMLEELRKKNRQELNAKSHTSSSVLSKPQEAELDGESEFEGFD.

The Q motif signature appears at 17–45; it reads WQALTPPLSEWILDAVAAMGFTRMTPVQA. Residues 48–257 enclose the Helicase ATP-binding domain; sequence IPLFMGHKDV…RVGLRNPVKI (210 aa). 61–68 lines the ATP pocket; sequence AVTGSGKT. The DEAD box motif lies at 205–208; it reads DEAD. Positions 291-444 constitute a Helicase C-terminal domain; it reads AIRQILNSID…SPPVALSDTL (154 aa). The tract at residues 534 to 653 is disordered; sequence KQREKHRQES…DGESEFEGFD (120 aa). A compositionally biased stretch (polar residues) spans 558–569; the sequence is PSSSSNNDTAPW. A coiled-coil region spans residues 571–627; that stretch reads KTLEKKSDKEKRRERKRAKKEREHWEKMTEEEKTKSRETHQMLEELRKKNRQELNAK. Basic and acidic residues-rich tracts occupy residues 572–581 and 590–626; these read TLEKKSDKEK and KERE…ELNA. Residues 627–636 show a composition bias toward polar residues; the sequence is KSHTSSSVLS. The span at 641-653 shows a compositional bias: acidic residues; sequence AELDGESEFEGFD.

The protein belongs to the DEAD box helicase family. DDX55/SPB4 subfamily. In terms of assembly, component of pre-60S ribosomal complexes.

It is found in the nucleus. The protein resides in the nucleolus. The enzyme catalyses ATP + H2O = ADP + phosphate + H(+). Functionally, ATP-binding RNA helicase involved in the biogenesis of 60S ribosomal subunits. Binds 90S pre-ribosomal particles and dissociates from pre-60S ribosomal particles after processing of 27SB pre-rRNA. Required for the normal formation of 18S rRNA through the processing of pre-rRNAs at sites A0, A1 and A2, and the normal formation of 25S and 5.8S rRNAs through the processing of pre-rRNAs at sites C1 and C2. The chain is ATP-dependent rRNA helicase SPB4 from Coccidioides immitis (strain RS) (Valley fever fungus).